Here is a 334-residue protein sequence, read N- to C-terminus: Delta(1)-pyrroline-2-carboxylate/Delta(1)-piperideine-2-carboxylate reductase (334 aa).

The Charge relay system role is filled by serine 44. Histidine 45 acts as the Proton donor in catalysis. Position 49 (arginine 49) interacts with substrate. 117–121 (HFSAL) lines the NADP(+) pocket. Threonine 157 serves as a coordination point for substrate. An NADP(+)-binding site is contributed by 175–177 (DFA). 183–184 (RG) contacts substrate. Catalysis depends on glutamate 185, which acts as the Charge relay system. NADP(+)-binding positions include 226–227 (HK) and 301–307 (RLPSQRR).

The protein belongs to the LDH2/MDH2 oxidoreductase family. Homodimer.

The catalysed reaction is L-pipecolate + NADP(+) = Delta(1)-piperideine-2-carboxylate + NADPH + H(+). It carries out the reaction L-proline + NADP(+) = 1-pyrroline-2-carboxylate + NADPH + H(+). The enzyme catalyses cis-4-hydroxy-L-proline + NADP(+) = Delta(1)-pyrroline-(4S)-hydroxy-2-carboxylate + NADPH + 2 H(+). In terms of biological role, catalyzes the reduction of both Delta(1)-pyrroline-2-carboxylate (Pyr2C) and Delta(1)-piperideine-2-carboxylate (Pip2C) to L-proline and L-pipecolate, respectively, using NADPH as the electron donor. Cannot use NADH instead of NADPH. Is likely involved in a degradation pathway that converts trans-3-hydroxy-L-proline (t3LHyp) to L-proline, which would allow P.aeruginosa to grow on t3LHyp as a sole carbon source. Can also catalyze the reverse oxidation reactions, albeit at a much lower rate. Is also able to use Delta(1)-pyrroline-(4S)-hydroxy-2-carboxylate (Pyr4SH2C) and cis-4-hydroxy-L-proline (c4LHyp) as substrates, and might be involved in the metabolism of c4LHyp, a compound which is generated by the hydroxylation of free L-proline in bacteria. The chain is Delta(1)-pyrroline-2-carboxylate/Delta(1)-piperideine-2-carboxylate reductase from Pseudomonas aeruginosa (strain ATCC 15692 / DSM 22644 / CIP 104116 / JCM 14847 / LMG 12228 / 1C / PRS 101 / PAO1).